The primary structure comprises 228 residues: Histidine/lysine/arginine/ornithine transport system permease protein HisQ (228 aa).

At 1–12 (MLYGFSGVILQG) the chain is on the periplasmic side. A helical membrane pass occupies residues 13-33 (ALVTLELAISSVVLAVIIGLI). Positions 13 to 212 (ALVTLELAIS…VFTTVSNGVL (200 aa)) constitute an ABC transmembrane type-1 domain. At 34-58 (GAGGKLSQNRLSGLIFEGYTTLIRG) the chain is on the cytoplasmic side. Residues 59–79 (VPDLVLMLLIFYGLQIALNTV) traverse the membrane as a helical segment. Residues 80–87 (TEAMGVGQ) are Periplasmic-facing. Residues 88 to 108 (IDIDPMVAGIITLGFIYGAYF) traverse the membrane as a helical segment. The Cytoplasmic segment spans residues 109–148 (TETFRGAFMAVPKGHIEAATAFGFTRGQVFRRIMFPSMMR). Residues 149-171 (YALPGIGNNWQVILKSTALVSLL) traverse the membrane as a helical segment. The Periplasmic segment spans residues 172–194 (GLEDVVKATQLAGKSTWEPFYFA). The chain crosses the membrane as a helical span at residues 195 to 215 (IVCGVIYLVFTTVSNGVLLFL). Residues 216–228 (ERRYSVGVKRADL) are Cytoplasmic-facing.

The protein belongs to the binding-protein-dependent transport system permease family. HisMQ subfamily. In terms of assembly, the HisPMQJ complex is composed of two ATP-binding proteins (HisP), two transmembrane proteins (HisM and HisQ) and a solute-binding protein (HisJ). The HisPMQ-ArgT complex is composed of two ATP-binding proteins (HisP), two transmembrane proteins (HisM and HisQ) and a solute-binding protein (ArgT).

The protein localises to the cell inner membrane. In terms of biological role, part of the ABC transporter complex HisPMQJ involved in histidine transport. Is also part of the ABC transporter complex HisPMQ-ArgT involved in lysine/arginine/ornithine transport. Probably responsible for the translocation of the substrate across the membrane. This Escherichia coli (strain K12) protein is Histidine/lysine/arginine/ornithine transport system permease protein HisQ (hisQ).